Reading from the N-terminus, the 445-residue chain is Alpha/beta hydrolase psoB (445 aa).

The active-site Nucleophile is the Ser-246.

Belongs to the AB hydrolase superfamily. FUS2 hydrolase family. As to quaternary structure, homodimer.

Its pathway is secondary metabolite biosynthesis. Its function is as follows. Alpha/beta hydrolase; part of the gene cluster that mediates the biosynthesis of pseurotin A, a competitive inhibitor of chitin synthase and an inducer of nerve-cell proliferation. The PKS-NRPS hybrid synthetase psoA is responsible for the biosynthesis of azaspirene, one of the first intermediates having the 1-oxa-7-azaspiro[4,4]-non-2-ene-4,6-dione core of pseurotin, via condensation of one acetyl-CoA, 4 malonyl-CoA, and a L-phenylalanine molecule. The dual-functional monooxygenase/methyltransferase psoF seems to be involved in the addition of the C3 methyl group onto the pseurotin scaffold. Azaspirene is then converted to synerazol through 4 steps including oxidation of C17 by the cytochrome P450 monooxygenase psoD, O-methylation of the hydroxy group of C8 by the methyltransferase psoC, and the trans-to-cis isomerization of the C13 olefin by the glutathione S-transferase psoE. The fourth step of synerazol production is performed by the dual-functional monooxygenase/methyltransferase psoF which seems to catalyze the epoxidation of the intermediate deepoxy-synerazol. Synerazol can be attacked by a water molecule nonenzymatically at two different positions to yield two diol products, pseurotin A and pseurotin D. The chain is Alpha/beta hydrolase psoB from Aspergillus fumigatus (strain ATCC MYA-4609 / CBS 101355 / FGSC A1100 / Af293) (Neosartorya fumigata).